The sequence spans 608 residues: Tectonic-3 (608 aa).

Positions 1 to 22 are cleaved as a signal peptide; it reads MRTPQLALLQVFLLMFPDGVRP. The tract at residues 23–58 is disordered; the sequence is QPSSSPSGAVPTSLDLQPGTVGGTLQSSSEATATRP. The Extracellular segment spans residues 23 to 586; that stretch reads QPSSSPSGAV…AFSRGVSSQK (564 aa). Residues 45 to 54 show a composition bias toward polar residues; the sequence is GTLQSSSEAT. N-linked (GlcNAc...) asparagine glycans are attached at residues N78, N179, and N347. Residues 587-607 traverse the membrane as a helical segment; sequence CSVSPVLILCLLLLGVLNLET. A topological domain (cytoplasmic) is located at residue T608.

Belongs to the tectonic family. As to quaternary structure, part of the tectonic-like complex (also named B9 complex).

It localises to the membrane. Part of the tectonic-like complex which is required for tissue-specific ciliogenesis and may regulate ciliary membrane composition. May be involved in apoptosis regulation. Necessary for signal transduction through the sonic hedgehog (Shh) signaling pathway. In Macaca fascicularis (Crab-eating macaque), this protein is Tectonic-3 (TCTN3).